Here is a 146-residue protein sequence, read N- to C-terminus: Ribonuclease P protein component (146 aa).

Belongs to the RnpA family. Consists of a catalytic RNA component (M1 or rnpB) and a protein subunit.

It catalyses the reaction Endonucleolytic cleavage of RNA, removing 5'-extranucleotides from tRNA precursor.. Its function is as follows. RNaseP catalyzes the removal of the 5'-leader sequence from pre-tRNA to produce the mature 5'-terminus. It can also cleave other RNA substrates such as 4.5S RNA. The protein component plays an auxiliary but essential role in vivo by binding to the 5'-leader sequence and broadening the substrate specificity of the ribozyme. This chain is Ribonuclease P protein component, found in Helicobacter hepaticus (strain ATCC 51449 / 3B1).